Here is a 144-residue protein sequence, read N- to C-terminus: MRIGGLDVGEKTIGVALSDELGLTAQALEVIRRRSLEQDLARLDEIARHYGVVRWVVGMPRNMNGTYGPRAELTRAFMERLAGHSGLPVEAWDERLSTMAAERVLLEADVSRARRRKVIDKMAAAVILQGYLDARAARPPESFV.

This sequence belongs to the YqgF nuclease family.

It localises to the cytoplasm. Its function is as follows. Could be a nuclease involved in processing of the 5'-end of pre-16S rRNA. This is Putative pre-16S rRNA nuclease from Symbiobacterium thermophilum (strain DSM 24528 / JCM 14929 / IAM 14863 / T).